Reading from the N-terminus, the 71-residue chain is ATP synthase F(0) complex subunit e, mitochondrial (71 aa).

Lys-34 bears the N6-acetyllysine mark. A Phosphoserine modification is found at Ser-68.

Belongs to the ATPase e subunit family. As to quaternary structure, component of the ATP synthase complex composed at least of ATP5F1A/subunit alpha, ATP5F1B/subunit beta, ATP5MC1/subunit c (homooctomer), MT-ATP6/subunit a, MT-ATP8/subunit 8, ATP5ME/subunit e, ATP5MF/subunit f, ATP5MG/subunit g, ATP5MK/subunit k, ATP5MJ/subunit j, ATP5F1C/subunit gamma, ATP5F1D/subunit delta, ATP5F1E/subunit epsilon, ATP5PF/subunit F6, ATP5PB/subunit b, ATP5PD/subunit d, ATP5PO/subunit OSCP. ATP synthase complex consists of a soluble F(1) head domain (subunits alpha(3) and beta(3)) - the catalytic core - and a membrane F(0) domain - the membrane proton channel (subunits c, a, 8, e, f, g, k and j). These two domains are linked by a central stalk (subunits gamma, delta, and epsilon) rotating inside the F1 region and a stationary peripheral stalk (subunits F6, b, d, and OSCP).

It localises to the mitochondrion. It is found in the mitochondrion inner membrane. Subunit e, of the mitochondrial membrane ATP synthase complex (F(1)F(0) ATP synthase or Complex V) that produces ATP from ADP in the presence of a proton gradient across the membrane which is generated by electron transport complexes of the respiratory chain. ATP synthase complex consist of a soluble F(1) head domain - the catalytic core - and a membrane F(1) domain - the membrane proton channel. These two domains are linked by a central stalk rotating inside the F(1) region and a stationary peripheral stalk. During catalysis, ATP synthesis in the catalytic domain of F(1) is coupled via a rotary mechanism of the central stalk subunits to proton translocation. In vivo, can only synthesize ATP although its ATP hydrolase activity can be activated artificially in vitro. Part of the complex F(0) domain. This is ATP synthase F(0) complex subunit e, mitochondrial from Pongo abelii (Sumatran orangutan).